Consider the following 422-residue polypeptide: Adenosylhomocysteinase (422 aa).

2 residues coordinate substrate: Asp129 and Glu154. 155–157 (TTT) provides a ligand contact to NAD(+). Substrate contacts are provided by Lys184 and Asp188. NAD(+) is bound by residues Asn189, 218 to 223 (GYGWCG), Glu241, Asn276, 297 to 299 (AGH), and Asn344.

The protein belongs to the adenosylhomocysteinase family. It depends on NAD(+) as a cofactor.

The protein resides in the cytoplasm. It catalyses the reaction S-adenosyl-L-homocysteine + H2O = L-homocysteine + adenosine. The protein operates within amino-acid biosynthesis; L-homocysteine biosynthesis; L-homocysteine from S-adenosyl-L-homocysteine: step 1/1. In terms of biological role, may play a key role in the regulation of the intracellular concentration of adenosylhomocysteine. The chain is Adenosylhomocysteinase from Pyrococcus abyssi (strain GE5 / Orsay).